Here is a 334-residue protein sequence, read N- to C-terminus: Spermidine synthase 1 (334 aa).

Residues 1-16 (MDAKETSATDLKRPRE) show a composition bias toward basic and acidic residues. The interval 1–35 (MDAKETSATDLKRPREEDDNGGAATMETENGDQKK) is disordered. One can recognise a PABS domain in the interval 45-282 (PGWFSEMSPM…GVIGFMLCST (238 aa)). Glutamine 76 contacts S-adenosyl 3-(methylsulfanyl)propylamine. Tyrosine 106 lines the putrescine pocket. Residues glutamine 107, aspartate 131, glutamate 151, 182–183 (DG), and aspartate 201 contribute to the S-adenosyl 3-(methylsulfanyl)propylamine site. The Proton acceptor role is filled by aspartate 201. Putrescine contacts are provided by residues 201–204 (DSSD) and tyrosine 270.

Belongs to the spermidine/spermine synthase family. As to quaternary structure, homotetramer and heterodimer. Component of a multiprotein complex. Interacts with SPMS and SPDSYN2.

It carries out the reaction S-adenosyl 3-(methylsulfanyl)propylamine + putrescine = S-methyl-5'-thioadenosine + spermidine + H(+). Its pathway is amine and polyamine biosynthesis; spermidine biosynthesis; spermidine from putrescine: step 1/1. The sequence is that of Spermidine synthase 1 (SPDSYN1) from Arabidopsis thaliana (Mouse-ear cress).